The following is a 334-amino-acid chain: Phosphoribosylformylglycinamidine cyclo-ligase (334 aa).

This sequence belongs to the AIR synthase family.

Its subcellular location is the cytoplasm. It carries out the reaction 2-formamido-N(1)-(5-O-phospho-beta-D-ribosyl)acetamidine + ATP = 5-amino-1-(5-phospho-beta-D-ribosyl)imidazole + ADP + phosphate + H(+). The protein operates within purine metabolism; IMP biosynthesis via de novo pathway; 5-amino-1-(5-phospho-D-ribosyl)imidazole from N(2)-formyl-N(1)-(5-phospho-D-ribosyl)glycinamide: step 2/2. This is Phosphoribosylformylglycinamidine cyclo-ligase from Thermococcus kodakarensis (strain ATCC BAA-918 / JCM 12380 / KOD1) (Pyrococcus kodakaraensis (strain KOD1)).